The chain runs to 344 residues: tRNA N6-adenosine threonylcarbamoyltransferase (344 aa).

Fe cation contacts are provided by histidine 112 and histidine 116. Substrate-binding positions include 135–139, aspartate 168, glycine 181, and asparagine 271; that span reads LVSGG. Aspartate 299 provides a ligand contact to Fe cation.

This sequence belongs to the KAE1 / TsaD family. It depends on Fe(2+) as a cofactor.

The protein resides in the cytoplasm. The catalysed reaction is L-threonylcarbamoyladenylate + adenosine(37) in tRNA = N(6)-L-threonylcarbamoyladenosine(37) in tRNA + AMP + H(+). Required for the formation of a threonylcarbamoyl group on adenosine at position 37 (t(6)A37) in tRNAs that read codons beginning with adenine. Is involved in the transfer of the threonylcarbamoyl moiety of threonylcarbamoyl-AMP (TC-AMP) to the N6 group of A37, together with TsaE and TsaB. TsaD likely plays a direct catalytic role in this reaction. The sequence is that of tRNA N6-adenosine threonylcarbamoyltransferase from Sphingopyxis alaskensis (strain DSM 13593 / LMG 18877 / RB2256) (Sphingomonas alaskensis).